Consider the following 312-residue polypeptide: Probable cell division protein WhiA (312 aa).

Positions 274 to 308 form a DNA-binding region, H-T-H motif; the sequence is SLKELGTLVPGGPISKSGVNHRLRKLNAYADELRQ.

Belongs to the WhiA family.

In terms of biological role, involved in cell division and chromosome segregation. This is Probable cell division protein WhiA from Limosilactobacillus fermentum (strain NBRC 3956 / LMG 18251) (Lactobacillus fermentum).